The primary structure comprises 114 residues: Hydrogenase maturation factor HypA (114 aa).

His-2 contributes to the Ni(2+) binding site. Zn(2+)-binding residues include Cys-70, Cys-73, Cys-86, and Cys-89.

Belongs to the HypA/HybF family.

Its function is as follows. Involved in the maturation of [NiFe] hydrogenases. Required for nickel insertion into the metal center of the hydrogenase. The chain is Hydrogenase maturation factor HypA from Trichodesmium erythraeum (strain IMS101).